The following is a 449-amino-acid chain: Intestinal acid phosphatase (449 aa).

Positions 1-19 (MVSAISIVAIFALEGFVTT) are cleaved as a signal peptide. Over 20-428 (YSDGTKDLVF…TDLNKSSSFA (409 aa)) the chain is Extracellular. The active-site Nucleophile is the His-36. Residue Asp-321 is the Proton donor of the active site. Residues 429-449 (TVSMLFIAAILAINNNFLGLF) traverse the membrane as a helical segment.

This sequence belongs to the histidine acid phosphatase family. As to quaternary structure, homodimer. Post-translationally, the N-terminus is blocked. As to expression, expressed in the intestine, specifically on the edge of the gut lumen, in the 14 posterior cells of the intestine.

The protein resides in the membrane. The enzyme catalyses a phosphate monoester + H2O = an alcohol + phosphate. In terms of biological role, acid phosphatase required for normal growth and development. Specifically required for normal gut differentiation. This chain is Intestinal acid phosphatase, found in Caenorhabditis elegans.